The chain runs to 159 residues: SsrA-binding protein (159 aa).

Over residues 131–148 the composition is skewed to basic and acidic residues; the sequence is YDKRQTLREKQDRREAER. The segment at 131–159 is disordered; the sequence is YDKRQTLREKQDRREAERTISAIKRKQRA.

This sequence belongs to the SmpB family.

The protein localises to the cytoplasm. In terms of biological role, required for rescue of stalled ribosomes mediated by trans-translation. Binds to transfer-messenger RNA (tmRNA), required for stable association of tmRNA with ribosomes. tmRNA and SmpB together mimic tRNA shape, replacing the anticodon stem-loop with SmpB. tmRNA is encoded by the ssrA gene; the 2 termini fold to resemble tRNA(Ala) and it encodes a 'tag peptide', a short internal open reading frame. During trans-translation Ala-aminoacylated tmRNA acts like a tRNA, entering the A-site of stalled ribosomes, displacing the stalled mRNA. The ribosome then switches to translate the ORF on the tmRNA; the nascent peptide is terminated with the 'tag peptide' encoded by the tmRNA and targeted for degradation. The ribosome is freed to recommence translation, which seems to be the essential function of trans-translation. The chain is SsrA-binding protein from Streptomyces coelicolor (strain ATCC BAA-471 / A3(2) / M145).